Here is a 340-residue protein sequence, read N- to C-terminus: Tartrate-resistant acid phosphatase type 5 (340 aa).

Residues 1 to 20 (MDTWTVLLILQASLVLPGAV) form the signal peptide. 4 residues coordinate Fe cation: D41, D79, Y82, and N118. Residues N124 and N155 are each glycosylated (N-linked (GlcNAc...) asparagine). C169 and C227 are disulfide-bonded. Residues H213, H248, and H250 each coordinate Fe cation.

Requires Fe cation as cofactor.

It localises to the secreted. It carries out the reaction a phosphate monoester + H2O = an alcohol + phosphate. Functionally, uteroferrin is a phosphoprotein phosphatase, synthesized in response to progesterone. It appears to function in transplacental transport of iron in pig. The protein is Tartrate-resistant acid phosphatase type 5 (ACP5) of Sus scrofa (Pig).